Reading from the N-terminus, the 103-residue chain is Cystatin-A1 (103 aa).

The Secondary area of contact motif lies at 51–55 (QVVAG).

The protein belongs to the cystatin family.

The protein resides in the cytoplasm. Functionally, this is an intracellular thiol proteinase inhibitor. The polypeptide is Cystatin-A1 (Sus scrofa (Pig)).